The chain runs to 238 residues: Aspartate/glutamate leucyltransferase (238 aa).

It belongs to the R-transferase family. Bpt subfamily.

The protein resides in the cytoplasm. It catalyses the reaction N-terminal L-glutamyl-[protein] + L-leucyl-tRNA(Leu) = N-terminal L-leucyl-L-glutamyl-[protein] + tRNA(Leu) + H(+). The catalysed reaction is N-terminal L-aspartyl-[protein] + L-leucyl-tRNA(Leu) = N-terminal L-leucyl-L-aspartyl-[protein] + tRNA(Leu) + H(+). Its function is as follows. Functions in the N-end rule pathway of protein degradation where it conjugates Leu from its aminoacyl-tRNA to the N-termini of proteins containing an N-terminal aspartate or glutamate. The chain is Aspartate/glutamate leucyltransferase from Aeromonas salmonicida (strain A449).